Consider the following 147-residue polypeptide: Nucleoside diphosphate kinase (147 aa).

Lys-9, Phe-57, Arg-85, Thr-91, Arg-102, and Asn-112 together coordinate ATP. His-115 functions as the Pros-phosphohistidine intermediate in the catalytic mechanism.

This sequence belongs to the NDK family. Homotetramer. Mg(2+) is required as a cofactor.

Its subcellular location is the cytoplasm. The enzyme catalyses a 2'-deoxyribonucleoside 5'-diphosphate + ATP = a 2'-deoxyribonucleoside 5'-triphosphate + ADP. The catalysed reaction is a ribonucleoside 5'-diphosphate + ATP = a ribonucleoside 5'-triphosphate + ADP. Major role in the synthesis of nucleoside triphosphates other than ATP. The ATP gamma phosphate is transferred to the NDP beta phosphate via a ping-pong mechanism, using a phosphorylated active-site intermediate. The sequence is that of Nucleoside diphosphate kinase from Brevibacillus brevis (strain 47 / JCM 6285 / NBRC 100599).